An 82-amino-acid chain; its full sequence is Small ribosomal subunit protein bS16 (82 aa).

Belongs to the bacterial ribosomal protein bS16 family.

The chain is Small ribosomal subunit protein bS16 from Enterobacter sp. (strain 638).